The sequence spans 118 residues: UPF0251 protein TTE1845 (118 aa).

The protein belongs to the UPF0251 family.

The chain is UPF0251 protein TTE1845 from Caldanaerobacter subterraneus subsp. tengcongensis (strain DSM 15242 / JCM 11007 / NBRC 100824 / MB4) (Thermoanaerobacter tengcongensis).